The sequence spans 710 residues: E3 ubiquitin-protein ligase TRIM9 (710 aa).

The RING-type zinc finger occupies 10–50 (CPVCGSFYREPIILPCSHNLCQACARNILVQTPESESPQSH). A Phosphothreonine modification is found at threonine 41. Residues serine 44, serine 46, and serine 49 each carry the phosphoserine modification. 2 B box-type zinc fingers span residues 163 to 212 (AAAL…LVPP) and 224 to 266 (RKVS…VKAL). Zn(2+) is bound by residues cysteine 168, cysteine 171, cysteine 193, histidine 198, cysteine 229, histidine 232, cysteine 252, and histidine 258. A coiled-coil region spans residues 273–340 (HKSQLSQALN…KAQLLARVNK (68 aa)). Positions 374-432 (IKENDPSGFLQISDALIRRVHLTEDQWGKGTLTPRMTTDFDLSLDNSPLLQSIHQLDFV) constitute a COS domain. The 96-residue stretch at 440-535 (VPATPILQLE…KTLVLQTSEV (96 aa)) folds into the Fibronectin type-III domain. The B30.2/SPRY domain maps to 533–702 (SEVAWFAFDP…LHTGLPVPDF (170 aa)).

The protein belongs to the TRIM/RBCC family. In terms of assembly, interacts with SNAP25. Post-translationally, auto-ubiquitinated. Poly-ubiquitinated in cultured cells, whereas it is monoubiquitinated in vitro. As to expression, brain. Highly expressed in the cerebral cortex (at protein level). Severely decreased in the affected brain areas in Parkinson disease and dementia with Lewy bodies.

Its subcellular location is the cytoplasm. The protein localises to the cell projection. The protein resides in the dendrite. It is found in the cytoplasmic vesicle. It localises to the secretory vesicle. Its subcellular location is the synaptic vesicle. The protein localises to the synapse. The protein resides in the cytoskeleton. It catalyses the reaction S-ubiquitinyl-[E2 ubiquitin-conjugating enzyme]-L-cysteine + [acceptor protein]-L-lysine = [E2 ubiquitin-conjugating enzyme]-L-cysteine + N(6)-ubiquitinyl-[acceptor protein]-L-lysine.. It participates in protein modification; protein ubiquitination. Its function is as follows. E3 ubiquitin-protein ligase which ubiquitinates itself in cooperation with an E2 enzyme UBE2D2/UBC4 and serves as a targeting signal for proteasomal degradation. May play a role in regulation of neuronal functions and may also participate in the formation or breakdown of abnormal inclusions in neurodegenerative disorders. May act as a regulator of synaptic vesicle exocytosis by controlling the availability of SNAP25 for the SNARE complex formation. The protein is E3 ubiquitin-protein ligase TRIM9 (TRIM9) of Homo sapiens (Human).